The chain runs to 71 residues: Vitellogenin-A1 (71 aa).

Positions 1–15 (MRGIILALLLAIAGS) are cleaved as a signal peptide. In terms of domain architecture, Vitellogenin spans 24–71 (FSESKTSVYNYEAVILNGFPESGLSRAGIKINCKVEISAYAQRSYFLK).

As to expression, produced by the liver, secreted into the blood and then sequestered by receptor mediated endocytosis into growing oocytes, where it is generally cleaved, giving rise to the respective yolk components.

Precursor of the major egg-yolk proteins that are sources of nutrients during early development of oviparous organisms. The sequence is that of Vitellogenin-A1 from Xenopus laevis (African clawed frog).